Consider the following 372-residue polypeptide: N-methyl-L-tryptophan oxidase (372 aa).

4-34 is an FAD binding site; that stretch reads DLIIIGSGSVGAAAGYYATRAGLKVLMTDAH. Cysteine 307 carries the post-translational modification S-8alpha-FAD cysteine.

The protein belongs to the MSOX/MTOX family. MTOX subfamily. Monomer. FAD is required as a cofactor.

It carries out the reaction N(alpha)-methyl-L-tryptophan + O2 + H2O = L-tryptophan + formaldehyde + H2O2. Its function is as follows. Catalyzes the oxidative demethylation of N-methyl-L-tryptophan. The polypeptide is N-methyl-L-tryptophan oxidase (Salmonella typhimurium (strain LT2 / SGSC1412 / ATCC 700720)).